The following is a 307-amino-acid chain: Thymidylate synthase (307 aa).

Residue Arg-44 coordinates dUMP. Ser-108 carries the phosphoserine modification. Residues 169-170, 189-190, 209-212, Asn-220, and 250-252 contribute to the dUMP site; these read RR, CH, RSGD, and HIY. Cys-189 (nucleophile) is an active-site residue. Asp-212 is a (6R)-5,10-methylene-5,6,7,8-tetrahydrofolate binding site. Glycyl lysine isopeptide (Lys-Gly) (interchain with G-Cter in SUMO2) cross-links involve residues Lys-286 and Lys-302. Ala-306 contributes to the (6R)-5,10-methylene-5,6,7,8-tetrahydrofolate binding site.

The protein belongs to the thymidylate synthase family. As to quaternary structure, homodimer.

Its subcellular location is the nucleus. The protein resides in the cytoplasm. It localises to the mitochondrion. The protein localises to the mitochondrion matrix. It is found in the mitochondrion inner membrane. It carries out the reaction dUMP + (6R)-5,10-methylene-5,6,7,8-tetrahydrofolate = 7,8-dihydrofolate + dTMP. It functions in the pathway pyrimidine metabolism; dTTP biosynthesis. Catalyzes the reductive methylation of 2'-deoxyuridine 5'-monophosphate (dUMP) to thymidine 5'-monophosphate (dTMP), using the cosubstrate, 5,10- methylenetetrahydrofolate (CH2H4folate) as a 1-carbon donor and reductant and contributes to the de novo mitochondrial thymidylate biosynthesis pathway. This Mus musculus (Mouse) protein is Thymidylate synthase (Tyms).